Here is a 278-residue protein sequence, read N- to C-terminus: Potassium/proton antiporter CemA (278 aa).

Transmembrane regions (helical) follow at residues 60–80, 163–183, 201–221, and 239–259; these read YLVL…SLVF, ILAF…IAVL, FLII…GWEV, and IFLF…YWIF.

Belongs to the CemA family.

The protein resides in the plastid. It is found in the chloroplast inner membrane. It catalyses the reaction K(+)(in) + H(+)(out) = K(+)(out) + H(+)(in). Functionally, contributes to K(+)/H(+) antiport activity by supporting proton efflux to control proton extrusion and homeostasis in chloroplasts in a light-dependent manner to modulate photosynthesis. Prevents excessive induction of non-photochemical quenching (NPQ) under continuous-light conditions. Indirectly promotes efficient inorganic carbon uptake into chloroplasts. The sequence is that of Potassium/proton antiporter CemA from Guillardia theta (Cryptophyte).